Reading from the N-terminus, the 282-residue chain is sn-glycerol-3-phosphate transport system permease protein UgpE (282 aa).

6 helical membrane-spanning segments follow: residues 14-34 (LILI…FVAS), 86-106 (MAIA…IVFF), 112-132 (MFFF…RILP), 146-168 (YAGL…QFFL), 201-221 (IAAL…WPLL), and 248-268 (WNYV…VVVL). The ABC transmembrane type-1 domain maps to 78 to 269 (LWNSFVVAMA…IPPILVVVLM (192 aa)).

This sequence belongs to the binding-protein-dependent transport system permease family. As to quaternary structure, the complex is composed of two ATP-binding proteins (UgpC), two transmembrane proteins (UgpA and UgpE) and a solute-binding protein (UgpB).

The protein resides in the cell inner membrane. In terms of biological role, part of the ABC transporter complex UgpBAEC involved in sn-glycerol-3-phosphate (G3P) import. Probably responsible for the translocation of the substrate across the membrane. In Brucella suis biovar 1 (strain 1330), this protein is sn-glycerol-3-phosphate transport system permease protein UgpE (ugpE).